Reading from the N-terminus, the 77-residue chain is SS18-like protein 2 (77 aa).

The short motif at 50 to 53 (YQHV) is the SH2-binding element.

Belongs to the SS18 family.

This chain is SS18-like protein 2 (Ss18l2), found in Mus musculus (Mouse).